The chain runs to 213 residues: Citrate synthase, mitochondrial (213 aa).

Residue His-74 is part of the active site. 2 positions are modified to N6-acetyllysine; alternate: Lys-94 and Lys-100. Lys-94 and Lys-100 each carry N6-succinyllysine; alternate. His-120 is a catalytic residue. Oxaloacetate is bound at residue Arg-129. Lys-148 carries the post-translational modification N6-acetyllysine; alternate. Lys-148 carries the post-translational modification N6-succinyllysine; alternate. An N6-acetyllysine modification is found at Lys-155. Lys-166 carries the N6-acetyllysine; alternate modification. Lys-166 bears the N6-succinyllysine; alternate mark. Residue Lys-168 is modified to N6,N6,N6-trimethyllysine. Asp-175 is an active-site residue. Arg-201 contributes to the oxaloacetate binding site.

Belongs to the citrate synthase family. As to quaternary structure, homodimer. Post-translationally, in response to mitochondrial stress, the precursor protein is ubiquitinated by the SIFI complex in the cytoplasm before mitochondrial import, leading to its degradation. Within the SIFI complex, UBR4 initiates ubiquitin chain that are further elongated or branched by KCMF1.

The protein resides in the mitochondrion matrix. It carries out the reaction oxaloacetate + acetyl-CoA + H2O = citrate + CoA + H(+). It participates in carbohydrate metabolism; tricarboxylic acid cycle; isocitrate from oxaloacetate: step 1/2. Key enzyme of the Krebs tricarboxylic acid cycle which catalyzes the synthesis of citrate from acetyl coenzyme A and oxaloacetate. In Mesocricetus auratus (Golden hamster), this protein is Citrate synthase, mitochondrial.